We begin with the raw amino-acid sequence, 144 residues long: Large ribosomal subunit protein uL15 (144 aa).

The segment at 1 to 56 is disordered; that stretch reads MELNTLAPAPGAKSSKKRVGRGIGSGLGKTGGRGHKGQKSRSGGSVKPGFEGGQMP. The segment covering 21–31 has biased composition (gly residues); it reads RGIGSGLGKTG.

This sequence belongs to the universal ribosomal protein uL15 family. Part of the 50S ribosomal subunit.

Binds to the 23S rRNA. The chain is Large ribosomal subunit protein uL15 from Idiomarina loihiensis (strain ATCC BAA-735 / DSM 15497 / L2-TR).